The primary structure comprises 642 residues: Threonine--tRNA ligase (642 aa).

The interval 239-530 (DHRKLGKELN…LTEHYAGAFP (292 aa)) is catalytic. Zn(2+)-binding residues include Cys331, His382, and His507.

This sequence belongs to the class-II aminoacyl-tRNA synthetase family. As to quaternary structure, homodimer. It depends on Zn(2+) as a cofactor.

The protein localises to the cytoplasm. It carries out the reaction tRNA(Thr) + L-threonine + ATP = L-threonyl-tRNA(Thr) + AMP + diphosphate + H(+). Functionally, catalyzes the attachment of threonine to tRNA(Thr) in a two-step reaction: L-threonine is first activated by ATP to form Thr-AMP and then transferred to the acceptor end of tRNA(Thr). Also edits incorrectly charged L-seryl-tRNA(Thr). This chain is Threonine--tRNA ligase, found in Lawsonia intracellularis (strain PHE/MN1-00).